A 190-amino-acid polypeptide reads, in one-letter code: Recombination protein RecR (190 aa).

The C4-type zinc-finger motif lies at 58–73 (CTQCGGLSEDELCYIC). Residues 81 to 167 (SSLCLVESAR…HFTKIAQGVP (87 aa)) enclose the Toprim domain.

Belongs to the RecR family.

Functionally, may play a role in DNA repair. It seems to be involved in an RecBC-independent recombinational process of DNA repair. It may act with RecF and RecO. The protein is Recombination protein RecR of Nitratiruptor sp. (strain SB155-2).